We begin with the raw amino-acid sequence, 711 residues long: Methionine--tRNA ligase (711 aa).

The 'HIGH' region signature appears at 15–25; that stretch reads PYTNGPIHIGH. 4 residues coordinate Zn(2+): Cys147, Cys150, Cys160, and Cys163. A 'KMSKS' region motif is present at residues 336–340; sequence KLSTS. Thr339 contacts ATP. In terms of domain architecture, tRNA-binding spans 610–711; sequence DFAKMDIRIG…ADAPNGATVN (102 aa).

Belongs to the class-I aminoacyl-tRNA synthetase family. MetG type 1 subfamily. As to quaternary structure, homodimer. Zn(2+) serves as cofactor.

It localises to the cytoplasm. The catalysed reaction is tRNA(Met) + L-methionine + ATP = L-methionyl-tRNA(Met) + AMP + diphosphate. Is required not only for elongation of protein synthesis but also for the initiation of all mRNA translation through initiator tRNA(fMet) aminoacylation. The polypeptide is Methionine--tRNA ligase (Flavobacterium johnsoniae (strain ATCC 17061 / DSM 2064 / JCM 8514 / BCRC 14874 / CCUG 350202 / NBRC 14942 / NCIMB 11054 / UW101) (Cytophaga johnsonae)).